We begin with the raw amino-acid sequence, 450 residues long: Tubulin alpha-3C chain (450 aa).

An MREC motif motif is present at residues 1–4; sequence MREC. Gln-11 serves as a coordination point for GTP. Lys-40 is modified (N6-acetyllysine). GTP-binding residues include Glu-71, Ser-140, Gly-144, Thr-145, Thr-179, Asn-206, and Asn-228. Glu-71 serves as a coordination point for Mg(2+). Glu-254 is an active-site residue. The residue at position 282 (Tyr-282) is a 3'-nitrotyrosine. Position 439 is a phosphoserine (Ser-439). Tyr-450 bears the 3'-nitrotyrosine mark.

This sequence belongs to the tubulin family. In terms of assembly, dimer of alpha and beta chains. A typical microtubule is a hollow water-filled tube with an outer diameter of 25 nm and an inner diameter of 15 nM. Alpha-beta heterodimers associate head-to-tail to form protofilaments running lengthwise along the microtubule wall with the beta-tubulin subunit facing the microtubule plus end conferring a structural polarity. Microtubules usually have 13 protofilaments but different protofilament numbers can be found in some organisms and specialized cells. It depends on Mg(2+) as a cofactor. Post-translationally, some glutamate residues at the C-terminus are polyglutamylated, resulting in polyglutamate chains on the gamma-carboxyl group. Polyglutamylation plays a key role in microtubule severing by spastin (SPAST). SPAST preferentially recognizes and acts on microtubules decorated with short polyglutamate tails: severing activity by SPAST increases as the number of glutamates per tubulin rises from one to eight, but decreases beyond this glutamylation threshold. Glutamylation is also involved in cilia motility. In terms of processing, some glutamate residues at the C-terminus are monoglycylated but not polyglycylated due to the absence of functional TTLL10 in human. Monoglycylation is mainly limited to tubulin incorporated into cilia and flagella axonemes, which is required for their stability and maintenance. Flagella glycylation controls sperm motility. Both polyglutamylation and monoglycylation can coexist on the same protein on adjacent residues, and lowering glycylation levels increases polyglutamylation, and reciprocally. Acetylation of alpha chains at Lys-40 is located inside the microtubule lumen. This modification has been correlated with increased microtubule stability, intracellular transport and ciliary assembly. Post-translationally, methylation of alpha chains at Lys-40 is found in mitotic microtubules and is required for normal mitosis and cytokinesis contributing to genomic stability. In terms of processing, nitration of Tyr-450 is irreversible and interferes with normal dynein intracellular distribution. Undergoes a tyrosination/detyrosination cycle, the cyclic removal and re-addition of a C-terminal tyrosine residue by the enzymes tubulin tyrosine carboxypeptidase (MATCAP1/KIAA0895L, VASH1 or VASH2) and tubulin tyrosine ligase (TTL), respectively. Post-translationally, tyrosination promotes microtubule interaction with CAP-Gly domain-containing proteins such as CLIP1, CLIP2 and DCTN1. Tyrosination regulates the initiation of dynein-dynactin motility via interaction with DCTN1, which brings the dynein-dynactin complex into contact with microtubules. In neurons, tyrosinated tubulins mediate the initiation of retrograde vesicle transport. In terms of processing, detyrosination is involved in metaphase plate congression by guiding chromosomes during mitosis: detyrosination promotes interaction with CENPE, promoting pole-proximal transport of chromosomes toward the equator. Detyrosination increases microtubules-dependent mechanotransduction in dystrophic cardiac and skeletal muscle. In cardiomyocytes, detyrosinated microtubules are required to resist to contractile compression during contraction: detyrosination promotes association with desmin (DES) at force-generating sarcomeres, leading to buckled microtubules and mechanical resistance to contraction. In terms of tissue distribution, expressed in testis.

The protein localises to the cytoplasm. The protein resides in the cytoskeleton. It catalyses the reaction GTP + H2O = GDP + phosphate + H(+). Functionally, tubulin is the major constituent of microtubules, a cylinder consisting of laterally associated linear protofilaments composed of alpha- and beta-tubulin heterodimers. Microtubules grow by the addition of GTP-tubulin dimers to the microtubule end, where a stabilizing cap forms. Below the cap, tubulin dimers are in GDP-bound state, owing to GTPase activity of alpha-tubulin. The chain is Tubulin alpha-3C chain (TUBA3C) from Homo sapiens (Human).